Here is a 334-residue protein sequence, read N- to C-terminus: 6-phosphogluconolactonase (334 aa).

It belongs to the cycloisomerase 2 family.

It catalyses the reaction 6-phospho-D-glucono-1,5-lactone + H2O = 6-phospho-D-gluconate + H(+). It participates in carbohydrate degradation; pentose phosphate pathway; D-ribulose 5-phosphate from D-glucose 6-phosphate (oxidative stage): step 2/3. Functionally, catalyzes the hydrolysis of 6-phosphogluconolactone to 6-phosphogluconate. The protein is 6-phosphogluconolactonase of Buchnera aphidicola subsp. Acyrthosiphon pisum (strain APS) (Acyrthosiphon pisum symbiotic bacterium).